The following is a 159-amino-acid chain: NADH-quinone oxidoreductase subunit B (159 aa).

Residues cysteine 36, cysteine 37, cysteine 102, and cysteine 132 each contribute to the [4Fe-4S] cluster site.

This sequence belongs to the complex I 20 kDa subunit family. In terms of assembly, NDH-1 is composed of 14 different subunits. Subunits NuoB, C, D, E, F, and G constitute the peripheral sector of the complex. The cofactor is [4Fe-4S] cluster.

The protein resides in the cell inner membrane. The catalysed reaction is a quinone + NADH + 5 H(+)(in) = a quinol + NAD(+) + 4 H(+)(out). NDH-1 shuttles electrons from NADH, via FMN and iron-sulfur (Fe-S) centers, to quinones in the respiratory chain. Couples the redox reaction to proton translocation (for every two electrons transferred, four hydrogen ions are translocated across the cytoplasmic membrane), and thus conserves the redox energy in a proton gradient. The chain is NADH-quinone oxidoreductase subunit B from Albidiferax ferrireducens (strain ATCC BAA-621 / DSM 15236 / T118) (Rhodoferax ferrireducens).